Here is a 344-residue protein sequence, read N- to C-terminus: Exopolyphosphatase 1 (344 aa).

Residues V319–P344 are disordered.

Belongs to the GppA/Ppx family. Homodimer.

The catalysed reaction is [phosphate](n) + H2O = [phosphate](n-1) + phosphate + H(+). Functionally, degradation of inorganic polyphosphates (polyP). Releases orthophosphate processively from the ends of the polyP chain. The protein is Exopolyphosphatase 1 of Mycobacterium bovis (strain ATCC BAA-935 / AF2122/97).